The chain runs to 150 residues: uncharacterized protein (150 aa).

It localises to the plastid. The protein localises to the chloroplast. This is an uncharacterized protein from Pyropia yezoensis (Susabi-nori).